Consider the following 252-residue polypeptide: Aquaporin TIP4-4 (252 aa).

Transmembrane regions (helical) follow at residues 20–40 and 53–73; these read AVLA…GSAM and VVGL…MVSA. Residues 83 to 85 carry the NPA 1 motif; the sequence is NPA. The next 3 membrane-spanning stretches (helical) occupy residues 105–125, 143–163, and 168–188; these read VAAQ…LAVA, GVLM…ATVV, and AVGG…VLAG. The NPA 2 signature appears at 197–199; the sequence is NPA. The chain crosses the membrane as a helical span at residues 216–236; it reads VYWVGPLIGGPLAGLVYDGLF.

The protein belongs to the MIP/aquaporin (TC 1.A.8) family. TIP (TC 1.A.8.10) subfamily.

It is found in the vacuole membrane. Functionally, aquaporins facilitate the transport of water and small neutral solutes across cell membranes. The sequence is that of Aquaporin TIP4-4 (TIP4-4) from Zea mays (Maize).